Here is a 523-residue protein sequence, read N- to C-terminus: MSEDKITGTLAFTVFTAVLSSFQFGYDIGVINAPQEVIISHYRHVLGVPLDDRKAAINYDVNGTDTPLTVTPAYTTPAPWDEEETEGSAHIVTMLWSLSVSSFAVGGMVASFFGGWLGDKLGRIKAMLAANSLSLTGALLMGCSKFGPAHALIIAGRSVSGLYCGLISGLVPMYIGEIAPTTLRGALGTLHQLALVTGILISQIAGLSFILGNQDHWHILLGLSAVPALLQCLLLLFCPESPRYLYIKLEEEVRAKKSLKRLRGTEDVTKDINEMKKEKEEASTEQKVSVIQLFTDANYRQPILVALMLHMAQQFSGINGIFYYSTSIFQTAGISQPVYATIGVGAINMIFTAVSVLLVEKAGRRTLFLTGMIGMFFCTIFMSVGLVLLDKFAWMSYVSMTAIFLFVSFFEIGPGPIPWFMVAEFFSQGPRPTALALAAFSNWVCNFVIALCFQYIADFLGPYVFFLFAGVVLVFTLFTFFKVPETKGKSFEEIAAEFRKKSGSAPPRKAAVQMEFLASSESV.

Residues 1 to 10 (MSEDKITGTL) are Cytoplasmic-facing. Residues 11–31 (AFTVFTAVLSSFQFGYDIGVI) traverse the membrane as a helical segment. Over 32 to 97 (NAPQEVIISH…SAHIVTMLWS (66 aa)) the chain is Extracellular. Asn-62 carries an N-linked (GlcNAc...) asparagine glycan. A helical transmembrane segment spans residues 98–118 (LSVSSFAVGGMVASFFGGWLG). Topologically, residues 119–126 (DKLGRIKA) are cytoplasmic. The helical transmembrane segment at 127 to 147 (MLAANSLSLTGALLMGCSKFG) threads the bilayer. Residues 148 to 157 (PAHALIIAGR) lie on the Extracellular side of the membrane. A helical transmembrane segment spans residues 158–178 (SVSGLYCGLISGLVPMYIGEI). Topologically, residues 179–186 (APTTLRGA) are cytoplasmic. Residues 187–207 (LGTLHQLALVTGILISQIAGL) form a helical membrane-spanning segment. Gln-192 is a D-glucose binding site. At 208–216 (SFILGNQDH) the chain is on the extracellular side. Residues 217 to 237 (WHILLGLSAVPALLQCLLLLF) traverse the membrane as a helical segment. Residues 238-302 (CPESPRYLYI…LFTDANYRQP (65 aa)) are Cytoplasmic-facing. The chain crosses the membrane as a helical span at residues 303 to 323 (ILVALMLHMAQQFSGINGIFY). D-glucose-binding positions include 313–314 (QQ) and Asn-319. Over 324–337 (YSTSIFQTAGISQP) the chain is Extracellular. The helical transmembrane segment at 338–358 (VYATIGVGAINMIFTAVSVLL) threads the bilayer. Asn-348 lines the D-glucose pocket. Topologically, residues 359–367 (VEKAGRRTL) are cytoplasmic. A helical membrane pass occupies residues 368-388 (FLTGMIGMFFCTIFMSVGLVL). The Extracellular segment spans residues 389–401 (LDKFAWMSYVSMT). A helical transmembrane segment spans residues 402-422 (AIFLFVSFFEIGPGPIPWFMV). D-glucose-binding residues include Glu-411 and Trp-419. The Cytoplasmic portion of the chain corresponds to 423-432 (AEFFSQGPRP). The chain crosses the membrane as a helical span at residues 433–453 (TALALAAFSNWVCNFVIALCF). Residues 454–460 (QYIADFL) are Extracellular-facing. Residues 461–481 (GPYVFFLFAGVVLVFTLFTFF) traverse the membrane as a helical segment. Topologically, residues 482-523 (KVPETKGKSFEEIAAEFRKKSGSAPPRKAAVQMEFLASSESV) are cytoplasmic. A Phosphoserine modification is found at Ser-522.

Belongs to the major facilitator superfamily. Sugar transporter (TC 2.A.1.1) family. Glucose transporter subfamily. In terms of processing, N-glycosylated; required for stability and retention at the cell surface of pancreatic beta cells. In embryo, expressed in endoderm layer of yolk sac and liver primordium.

It localises to the cell membrane. The enzyme catalyses D-glucose(out) = D-glucose(in). It catalyses the reaction D-fructose(out) = D-fructose(in). The catalysed reaction is L-dehydroascorbate(out) = L-dehydroascorbate(in). It carries out the reaction D-galactose(in) = D-galactose(out). Its activity is regulated as follows. D-glucose and maltose competitively inhibit fructose transport. D-glucose, D-fructose and maltose inhibit deoxyglucose transport. Its function is as follows. Facilitative hexose transporter that mediates the transport of glucose, fructose and galactose. Likely mediates the bidirectional transfer of glucose across the plasma membrane of hepatocytes and is responsible for uptake of glucose by the beta cells; may comprise part of the glucose-sensing mechanism of the beta cell. May also participate with the Na(+)/glucose cotransporter in the transcellular transport of glucose in the small intestine and kidney. Also able to mediate the transport of dehydroascorbate. This chain is Solute carrier family 2, facilitated glucose transporter member 2, found in Mus musculus (Mouse).